Consider the following 154-residue polypeptide: Protein disulfide-isomerase LQY1, chloroplastic (154 aa).

The N-terminal 43 residues, 1–43 (MPVSAPSPPRLHSPFIHCPINFTPSSFSARNLRSPSTSYPRIK), are a transit peptide targeting the chloroplast. The helical transmembrane segment at 51-71 (VVAISVGVASVALGIGIPVFY) threads the bilayer. A CR-type zinc finger spans residues 77–147 (NAAKRENTQP…SGVQPRYLDR (71 aa)). Residues Cys87, Cys90, Cys98, Cys101, Cys121, Cys124, Cys132, and Cys135 each coordinate Zn(2+).

It belongs to the BSD2 chaperone family. Interacts with the photosystem II core subunits. Interacts with HHL1. Zn(2+) is required as a cofactor.

It localises to the plastid. Its subcellular location is the chloroplast thylakoid membrane. The catalysed reaction is Catalyzes the rearrangement of -S-S- bonds in proteins.. In terms of biological role, protein disulfide-isomerase probably involved upon formation of a complex with HHL1 in maintaining photosystem II (PSII) activity under high light by regulating repair and reassembly of PSII complexes. The chain is Protein disulfide-isomerase LQY1, chloroplastic from Arabidopsis thaliana (Mouse-ear cress).